Here is a 240-residue protein sequence, read N- to C-terminus: UDP-2,3-diacylglucosamine hydrolase (240 aa).

Mn(2+) contacts are provided by Asp-8, His-10, Asp-41, Asn-79, and His-114. Substrate is bound at residue 79 to 80 (NR). Asp-122, Ser-160, Asn-164, Lys-167, and His-195 together coordinate substrate. Residues His-195 and His-197 each coordinate Mn(2+).

The protein belongs to the LpxH family. Mn(2+) serves as cofactor.

Its subcellular location is the cell inner membrane. It carries out the reaction UDP-2-N,3-O-bis[(3R)-3-hydroxytetradecanoyl]-alpha-D-glucosamine + H2O = 2-N,3-O-bis[(3R)-3-hydroxytetradecanoyl]-alpha-D-glucosaminyl 1-phosphate + UMP + 2 H(+). The protein operates within glycolipid biosynthesis; lipid IV(A) biosynthesis; lipid IV(A) from (3R)-3-hydroxytetradecanoyl-[acyl-carrier-protein] and UDP-N-acetyl-alpha-D-glucosamine: step 4/6. Hydrolyzes the pyrophosphate bond of UDP-2,3-diacylglucosamine to yield 2,3-diacylglucosamine 1-phosphate (lipid X) and UMP by catalyzing the attack of water at the alpha-P atom. Involved in the biosynthesis of lipid A, a phosphorylated glycolipid that anchors the lipopolysaccharide to the outer membrane of the cell. The chain is UDP-2,3-diacylglucosamine hydrolase from Cellvibrio japonicus (strain Ueda107) (Pseudomonas fluorescens subsp. cellulosa).